Reading from the N-terminus, the 2116-residue chain is MEKLLDEVLAPGGPYNLTVGSWVRDHVRSIVEGAWEVRDVVTAAQKRAIVAVIPRPVFTQMQVSDHPALHAISRYTRRHWIEWGPKEALHVLIDPSPGLLREVARVERRWVALCLHRTARKLATALAETASEAWHADYVCALRGAPSGPFYVHPEDVPHGGRAVADRCLLYYTPMQMCELMRTIDATLLVAVDLWPVALAAHVGDDWDDLGIAWHLDHDGGCPADCRGAGAGPTPGYTRPCTTRIYQVLPDTAHPGRLYRCGPRLWTRDCAVAELSWEVAQHCGHQARVRAVRCTLPIRHVRSLQPSARVRLPDLVHLAEVGRWRWFSLPRPVFQRMLSYCKTLSPDAYYSERVFKFKNALSHSITLAGNVLQEGWKGTCAEEDALCAYVAFRAWQSNARLAGIMKSAKRCAADSLSVAGWLDTIWDAIKRFFGSVPLAERMEEWEQDAAVAAFDRGPLEDGGRHLDTVQPPKSPPRPEIAATWIVHAASADRHCACAPRRDAPRERPSAPAGPPDDEALIPPWLFAERRALRCREWDFEALRARADTAAAPAPLAPRPARCPTVLYRHPAHYGPWLTLDEPGEADAALVLCDPLGQPLRGPERHFAAGAHMCAQARGLQAFVRVVPPPERPWADGGARAWAKFFRGCAWAQRLLGEPAVMHLPYTDGDVPQLIALALRTLAQQGAALALSVRDLPGGAAFDANAVTAAVRAGPGQSAATSPPPGDPPPPRRARRSQRHLDARGTPPPAPARDPPPPAPSPPAPPRAGDPVLPTSAGPADRARHAELEVAYEPSDPPTPTKADPDSDIVESYARAAGPVHLRVRDIMDPPPGCKVVVNAANEGLLAGSGVCGAIFANATAALAADCRRLAPCPTGEAVATPGHGCGYTHIIHAVAPRRPRDPAALEEGEALLERAYRSIVALAAARRWACVACPLLGAGVYGWSAAESLRAALAATRAEPAERVSLHICHPDRATLTHASVLVGAGLAARRVSPPPTEPLASCPAGDPGRPAQRSASPPATPLGDATAPEPRGCQGCELCRYTRVTNDRAYVNLWLERDRGATSWAMRIPEVVVYGPEHLATHFPLNHYSVLKPAEVRPPRGMCGSDMWRCRGWQGMPQVRCTPSNAHAALCRTGVPPRVSTRGGELDPNTCWLRAAASVAQAARACGAYTSAGCPKCAYGRALSEARTHEDFAALSQRWSASHADASPDGTGDPLDPLMETVGCACSRVWVGSEHEAPPDHLLVSLHRAPNGPWGVVLEVRARPEGGNPTGHFVCAVGGGPRRVSDRPHLWLAVPLSRGGGTCAATDEGLAQAYYDDLEVRRLGDDAMARAALASVQRPRKGPYNIRVWDMAAGAGKTTRILAAFTREDLYVCPTNALLHEIQAKLRARDIDIKNAATYERALTKPLAAYRRIYIDEAFTLGGEYCAFVASQTTAEVICVGDRDQCGPHYANNCRTPVPDRWPTERSRHTWRFPDCWAARLRAGLDYDIEGERTGTFACNLWDGRQVDLHLAFSRETVRRLHEAGIRAYTVREAQGMSVGTACIHVGRDGTDVALALTRDLAIVSLTRASDALYLHELEDGSLRAAGLSAFLDAGALAELKEVPAGIDRVVAVEQAPPPLPPADGIPEAQDVPPFCPRTLEELVFGRAGHPHYADLNRVTEGEREVRYMRISRHLLNKNHTEMPGTERVLSAVCAVRRYRAGEDGSTLRTAVARQHPRPFRQIPPPRVTAGVAQEWRMTYLRERIDLTDVYTQMGVAARELTDRYARRYPEIFAGMCTAQSLSVPAFLKATLKCVDAALGPRDTEDCHAAQGKAGLEIRAWAKEWVQVMSPHFRAIQKIIMRALRPQFLVAAGHTEPEVDAWWQAHYTTNAIEVDFTEFDMNQTLATRDVELEISAALLGLPCAEDYRALRAGSYCTLRELGSTETGCERTSGEPATLLHNTTVAMCMAMRMVPKGVRWAGIFQGDDMVIFLPEGARSAALKWTPAEVGLFGFHIPVKHVSTPTPSFCGHVGTAAGLFHDVMHQAIKVLCRRFDPDVLEEQQVALLDRLRGVYAALPDTVAANAAYYDYSAERVLAIVRELTAYARGRGLDHPATIGALEEIQTPYARANLHDAD.

The tract at residues 36–49 (EVRDVVTAAQKRAI) is required for efficient proteolysis and P150-P90 interaction. The 191-residue stretch at 57 to 247 (VFTQMQVSDH…TRPCTTRIYQ (191 aa)) folds into the Alphavirus-like MT domain. 2 stretches are compositionally biased toward basic and acidic residues: residues 457–467 (GPLEDGGRHLD) and 497–508 (CAPRRDAPRERP). Disordered regions lie at residues 457-477 (GPLEDGGRHLDTVQPPKSPPR), 497-519 (CAPRRDAPRERPSAPAGPPDDEA), and 712-780 (AGPG…GPAD). Pro residues-rich tracts occupy residues 721–730 (SPPPGDPPPP) and 745–767 (TPPPAPARDPPPPAPSPPAPPRA). Short sequence motifs (pxxPxR; class II SH3-binding) lie at residues 727–732 (PPPPRR), 747–752 (PPAPAR), and 761–766 (PPAPPR). The 180-residue stretch at 806–985 (SDIVESYARA…LTHASVLVGA (180 aa)) folds into the Macro domain. Positions 992–1031 (VSPPPTEPLASCPAGDPGRPAQRSASPPATPLGDATAPEP) are disordered. The Peptidase C27 domain occupies 1000–1301 (LASCPAGDPG…WLAVPLSRGG (302 aa)). Catalysis depends on Cys1152, which acts as the For cysteine protease activity. Residues 1152–1183 (CWLRAAASVAQAARACGAYTSAGCPKCAYGRA) are interaction with host CALM1. Zn(2+)-binding residues include Cys1175, Cys1178, Cys1227, and His1273. Residues 1193–1228 (FAALSQRWSASHADASPDGTGDPLDPLMETVGCACS) are EF-hand-like. Residue His1273 is the For cysteine protease activity of the active site. The (+)RNA virus helicase ATP-binding domain maps to 1320 to 1468 (EVRRLGDDAM…VPDRWPTERS (149 aa)). Position 1352-1359 (1352-1359 (MAAGAGKT)) interacts with a ribonucleoside 5'-triphosphate. Residues 1469 to 1609 (RHTWRFPDCW…ELKEVPAGID (141 aa)) enclose the (+)RNA virus helicase C-terminal domain. The tract at residues 1700–1900 (YRAGEDGSTL…VELEISAALL (201 aa)) is involved in P150-P90 interaction. One can recognise a RdRp catalytic domain in the interval 1870 to 1981 (TNAIEVDFTE…FLPEGARSAA (112 aa)). The Human RB1 binding signature appears at 1902–1906 (LPCAE).

Interacts with RNA-directed RNA polymerase p90. Interacts with host CALM1; this interaction is necessary for the protease activity and viral infectivity. Interacts with host C1QBP. Interacts with the capsid protein. As to quaternary structure, interacts with human RB1/retinoblastoma protein. Interacts with protease/methyltransferase p150. Requires Zn(2+) as cofactor. Specific enzymatic cleavage by its own cysteine protease yield mature proteins p150 and p90.

Its subcellular location is the host membrane. The protein localises to the host cytoplasm. It is found in the host perinuclear region. It catalyses the reaction RNA(n) + a ribonucleoside 5'-triphosphate = RNA(n+1) + diphosphate. The catalysed reaction is a ribonucleoside 5'-triphosphate + H2O = a ribonucleoside 5'-diphosphate + phosphate + H(+). The enzyme catalyses ATP + H2O = ADP + phosphate + H(+). In terms of biological role, probable principal replicase for the negative-strand DNA, which replicates the 40S (+) genomic RNA into (-) antigenomic RNA. It cannot replicate the (-) into (+) until cleaved into p150 and p90 mature proteins. Functionally, protease that cleaves the precursor polyprotein into two mature products. Together with RNA-directed RNA polymerase p90, replicates the 40S genomic and antigenomic RNA by recognizing replications specific signals. The heterodimer P150/p90 is probably the principal replicase for positive-strand genomic RNA and the 24S subgenomic RNA, which codes for structural proteins. Responsible for the mRNA-capping of the viral mRNAs. This function is necessary since all viral RNAs are synthesized in the cytoplasm, and host capping enzymes are restricted to the nucleus. Forms fibers late in the infection that may be involved in cell-to-cell spread of the virus RNA in the absence of virus particle formation. Its function is as follows. Together with protease/methyltransferase p150, replicates the 40S genomic and antigenomic RNA by recognizing replications specific signals. The heterodimer P150/p90 is probably the principal replicase for positive-strand genomic RNA and the 24S subgenomic RNA, which codes for structural proteins. A helicase activity is probably also present. This Homo sapiens (Human) protein is Non-structural polyprotein p200.